The primary structure comprises 161 residues: Nucleotide-binding protein XOO0647 (161 aa).

It belongs to the YajQ family.

In terms of biological role, nucleotide-binding protein. The polypeptide is Nucleotide-binding protein XOO0647 (Xanthomonas oryzae pv. oryzae (strain MAFF 311018)).